We begin with the raw amino-acid sequence, 298 residues long: Porphobilinogen deaminase (298 aa).

Position 242 is an S-(dipyrrolylmethanemethyl)cysteine (Cys242).

It belongs to the HMBS family. Monomer. The cofactor is dipyrromethane.

It carries out the reaction 4 porphobilinogen + H2O = hydroxymethylbilane + 4 NH4(+). The protein operates within porphyrin-containing compound metabolism; protoporphyrin-IX biosynthesis; coproporphyrinogen-III from 5-aminolevulinate: step 2/4. Its function is as follows. Tetrapolymerization of the monopyrrole PBG into the hydroxymethylbilane pre-uroporphyrinogen in several discrete steps. The protein is Porphobilinogen deaminase of Fusobacterium nucleatum subsp. nucleatum (strain ATCC 25586 / DSM 15643 / BCRC 10681 / CIP 101130 / JCM 8532 / KCTC 2640 / LMG 13131 / VPI 4355).